The following is a 269-amino-acid chain: 4-hydroxy-tetrahydrodipicolinate reductase (269 aa).

NAD(+) is bound by residues 11–16 and Glu-37; that span reads GASGRM. Residue Arg-38 coordinates NADP(+). Residues 101–103 and 125–128 each bind NAD(+); these read GTT and AGNM. His-158 (proton donor/acceptor) is an active-site residue. His-159 contacts (S)-2,3,4,5-tetrahydrodipicolinate. Lys-162 serves as the catalytic Proton donor. 168–169 is a binding site for (S)-2,3,4,5-tetrahydrodipicolinate; it reads GT.

This sequence belongs to the DapB family.

Its subcellular location is the cytoplasm. It catalyses the reaction (S)-2,3,4,5-tetrahydrodipicolinate + NAD(+) + H2O = (2S,4S)-4-hydroxy-2,3,4,5-tetrahydrodipicolinate + NADH + H(+). It carries out the reaction (S)-2,3,4,5-tetrahydrodipicolinate + NADP(+) + H2O = (2S,4S)-4-hydroxy-2,3,4,5-tetrahydrodipicolinate + NADPH + H(+). Its pathway is amino-acid biosynthesis; L-lysine biosynthesis via DAP pathway; (S)-tetrahydrodipicolinate from L-aspartate: step 4/4. Its function is as follows. Catalyzes the conversion of 4-hydroxy-tetrahydrodipicolinate (HTPA) to tetrahydrodipicolinate. The sequence is that of 4-hydroxy-tetrahydrodipicolinate reductase from Ruegeria sp. (strain TM1040) (Silicibacter sp.).